The chain runs to 171 residues: Tetratricopeptide repeat protein 9C (171 aa).

3 TPR repeats span residues 8-41 (AQLY…LRGL), 72-107 (TDCY…QPDN), and 108-141 (AKAL…KPKD).

This sequence belongs to the TTC9 family.

This Bos taurus (Bovine) protein is Tetratricopeptide repeat protein 9C (TTC9C).